Reading from the N-terminus, the 470-residue chain is Probable tocopherol cyclase, chloroplastic (470 aa).

The N-terminal 61 residues, 1–61 (MDLAAAAVAV…APTPRDRALR (61 aa)), are a transit peptide targeting the chloroplast. The interval 14 to 48 (RPAPPPRRCAPRRHRRALAPRAASSSPSPSTAVAA) is disordered. Positions 22–31 (CAPRRHRRAL) are enriched in basic residues. The segment covering 32-48 (APRAASSSPSPSTAVAA) has biased composition (low complexity).

In terms of tissue distribution, expressed in the roots, stems, leaves and spikelets.

It is found in the plastid. The protein resides in the chloroplast. Its subcellular location is the plastoglobule. It participates in cofactor biosynthesis; tocopherol biosynthesis. Involved in the synthesis of both tocopherols and tocotrienols (vitamin E), which presumably protect photosynthetic complexes from oxidative stress. Catalyzes the conversion of 2-methyl-6-phytyl-1,4-hydroquinone and 2,3-dimethyl-5-phytyl-1,4-hydroquinone (DMPQ) to delta- and gamma-tocopherol respectively. Also converts 2,3-dimethyl-5-geranylgeranyl-1,4-hydroquinone (DMGQ) to gamma-tocotrienol. This is Probable tocopherol cyclase, chloroplastic (VTE1) from Oryza sativa subsp. japonica (Rice).